The sequence spans 87 residues: Homeotic protein ultrabithorax (87 aa).

Positions 22 to 27 (FYPWMA) match the Antp-type hexapeptide motif.

This sequence belongs to the Antp homeobox family. As to expression, in the embryo, expression is seen in the epidermis, somatic and visceral mesoderm, and the peripheral and central nervous system.

The protein localises to the nucleus. Functionally, sequence-specific transcription factor which is part of a developmental regulatory system that provides cells with specific positional identities on the anterior-posterior axis. Binds the consensus region 5'-TTAAT[GT][GA]-3'. This homeotic protein controls development of the cells in the posterior thoracic and first abdominal segments. It activates the synthesis of the decapentaplegic (DPP) growth factor. The sequence is that of Homeotic protein ultrabithorax (Ubx) from Drosophila hydei (Fruit fly).